The primary structure comprises 241 residues: Putative inactive serine protease 58 (241 aa).

Positions 1–17 (MKLAFLCILSTLLRTFA) are cleaved as a signal peptide. In terms of domain architecture, Peptidase S1 spans 18–239 (YNPDHIAGTT…YLPWIEDTMK (222 aa)). Cysteines 41 and 57 form a disulfide. Catalysis depends on charge relay system residues His-56 and Asp-101. 3 disulfide bridges follow: Cys-133–Cys-201, Cys-165–Cys-180, and Cys-191–Cys-215. Residue Asn-156 is glycosylated (N-linked (GlcNAc...) asparagine).

It belongs to the peptidase S1 family.

Its subcellular location is the secreted. The enzyme catalyses Preferential cleavage: Arg-|-Xaa, Lys-|-Xaa.. This Mus musculus (Mouse) protein is Putative inactive serine protease 58 (Prss58).